The sequence spans 93 residues: Small ribosomal subunit protein uS19 (93 aa).

Positions Met1 to Asn23 are disordered. Residues Pro9–Asn23 are compositionally biased toward basic and acidic residues.

The protein belongs to the universal ribosomal protein uS19 family.

Functionally, protein S19 forms a complex with S13 that binds strongly to the 16S ribosomal RNA. The protein is Small ribosomal subunit protein uS19 of Nocardioides sp. (strain ATCC BAA-499 / JS614).